The following is a 28-amino-acid chain: 3,4-dihydroxybenzoate decarboxylase (28 aa).

As to quaternary structure, homopentamer.

The catalysed reaction is 3,4-dihydroxybenzoate + H(+) = catechol + CO2. With respect to regulation, inhibited by oxygen. Completely inhibited by HgCl(2). Partially inhibited by ZnSO(4), 2,3,4-trihydroxybeonzoate and 3,4,5-trihydroxybeonzoate. Unaffected by KCl, MnCl(2) or EDTA. Not stimulated by thiamine phosphate, pyridoxal 5'-phosphate or biotin. Not inhibited by hydroxylamine, NaBH(4) or avidin. In terms of biological role, reversibly catalyzes the decarboxylation of 3,4-dihydroxybenzoate to catechol. Inactive toward 4-hydroxybenzoate and other benzoate derivatives. In Sedimentibacter hydroxybenzoicus (Clostridium hydroxybenzoicum), this protein is 3,4-dihydroxybenzoate decarboxylase.